Reading from the N-terminus, the 492-residue chain is Beta-Ala-His dipeptidase (492 aa).

Zn(2+) is bound at residue histidine 107. Residue aspartate 109 is part of the active site. Residue aspartate 140 participates in Zn(2+) binding. Glutamate 174 serves as the catalytic Proton acceptor. Residue glutamate 175 participates in Zn(2+) binding. Serine 194 carries the phosphoserine modification. Zn(2+) contacts are provided by aspartate 203 and histidine 453.

This sequence belongs to the peptidase M20A family. Homodimer. The cofactor is Zn(2+). In terms of tissue distribution, detected exclusively in kidney.

The protein resides in the secreted. The catalysed reaction is Preferential hydrolysis of the beta-Ala-|-His dipeptide (carnosine), and also anserine, Xaa-|-His dipeptides and other dipeptides including homocarnosine.. The enzyme catalyses carnosine + H2O = beta-alanine + L-histidine. It catalyses the reaction anserine + H2O = N(pros)-methyl-L-histidine + beta-alanine. It carries out the reaction L-alanyl-L-histidine + H2O = L-histidine + L-alanine. The catalysed reaction is glycyl-L-histidine + H2O = L-histidine + glycine. The enzyme catalyses L-homocarnosine + H2O = 4-aminobutanoate + L-histidine. Its function is as follows. Catalyzes the peptide bond hydrolysis in Xaa-His dipeptides, displaying the highest activity toward carnosine (beta-alanyl-L-histidine) and anserine (beta-alanyl-3-methyl-histidine). This chain is Beta-Ala-His dipeptidase (Cndp1), found in Mus musculus (Mouse).